The primary structure comprises 906 residues: MVSFGGLARKIFGSSNDRRVKTLRQRAEQITALEKNYENLTDEQLQAKTAEFRAALAEGKSLDSLLPDAFATAREAAKRVLGMRPFDVQLIGGMVLHERGIAEMRTGEGKTLMATLPVYLNALEGKGVHVVTVNDYLATRDAETMGRLYNFLGLTVGVIKHGLDDDERRAAYACDITYGTNNELGFDYLRDNMKYERAQMVQRPHNYAIVDEVDSILIDEARTPLIISGPLEDRSDFYNLIDTFIPPLAEEDYEVDEKQKTAIFTEVGTEKVEKLLEAAGHLKGESLYDIENVAVVHHLNNALRAHKLFQRDKDYIVRNDEIVIIDEFTGRMMPGRRYSEGLHQALEAKEHVTIQPENQTLASITFQNYFRMYNKLSGMTGTAATEAEEFGNIYGLEVLEIPTNLPVQRIDEDDEVYRTVEEKYRAIVRDIRASHEKGQPILVGTTSIEKSEQLAERLRREGIKGFQVLNARYHEQEAYIIAQAGVPGAVTIATNMAGRGTDIQLGGNLEMRVRQELSDVPEGSEREEKIAAIKADIAQLKEKALAAGGLYVLATERHESRRIDNQLRGRSGRQGDPGRSKFFLSLQDDLMRIFGSDRMDGMLQKLGLKEDEAIVHPWINKALEKAQKKVEARNFEIRKNLLKYDDVMNDQRKVIFEQRLEMMDEEDLTETVAEMRHEVIEDMVILRIPKDAYAEKWDIAGLKQDIASKLNLDLPVEEWAKEEDIAEEEFENRIKEAADKAAAEKAERFGPQIMTYVEKSVIMQSLDNLWREHLVNLDHLRSVVGFRGYAQRDPLNEYKTEAFELFQTMLANLREVVISQLMRVEIVGEAPPEPQLPPMAGLHIDGTTGENDFDEAIWAEHQHDDRIVPPAQRDPADPRTWGKVSRNEPCPCGSGKKYKHCHGAFE.

ATP contacts are provided by residues Gln-89, 107 to 111 (GEGKT), and Asp-502. Residues Cys-890, Cys-892, Cys-901, and His-902 each coordinate Zn(2+).

It belongs to the SecA family. Monomer and homodimer. Part of the essential Sec protein translocation apparatus which comprises SecA, SecYEG and auxiliary proteins SecDF-YajC and YidC. It depends on Zn(2+) as a cofactor.

It is found in the cell inner membrane. The protein localises to the cytoplasm. It carries out the reaction ATP + H2O + cellular proteinSide 1 = ADP + phosphate + cellular proteinSide 2.. In terms of biological role, part of the Sec protein translocase complex. Interacts with the SecYEG preprotein conducting channel. Has a central role in coupling the hydrolysis of ATP to the transfer of proteins into and across the cell membrane, serving both as a receptor for the preprotein-SecB complex and as an ATP-driven molecular motor driving the stepwise translocation of polypeptide chains across the membrane. This chain is Protein translocase subunit SecA, found in Brucella suis biovar 1 (strain 1330).